Consider the following 625-residue polypeptide: Endoglucanase 13 (625 aa).

The first 34 residues, Met-1–Ala-34, serve as a signal peptide directing secretion. The active-site Nucleophile is the Asp-91. The active site involves His-427. Asn-440 carries an N-linked (GlcNAc...) asparagine glycan. Active-site residues include Asp-479 and Glu-488. Residues Ala-509–Pro-530 form a disordered region.

It belongs to the glycosyl hydrolase 9 (cellulase E) family. In terms of tissue distribution, expressed in roots and flowers.

The protein resides in the secreted. It catalyses the reaction Endohydrolysis of (1-&gt;4)-beta-D-glucosidic linkages in cellulose, lichenin and cereal beta-D-glucans.. This chain is Endoglucanase 13 (GLU6), found in Oryza sativa subsp. japonica (Rice).